Reading from the N-terminus, the 252-residue chain is Imidazole glycerol phosphate synthase subunit HisF (252 aa).

Residues Asp-13 and Asp-132 contribute to the active site.

Belongs to the HisA/HisF family. As to quaternary structure, heterodimer of HisH and HisF.

Its subcellular location is the cytoplasm. It carries out the reaction 5-[(5-phospho-1-deoxy-D-ribulos-1-ylimino)methylamino]-1-(5-phospho-beta-D-ribosyl)imidazole-4-carboxamide + L-glutamine = D-erythro-1-(imidazol-4-yl)glycerol 3-phosphate + 5-amino-1-(5-phospho-beta-D-ribosyl)imidazole-4-carboxamide + L-glutamate + H(+). The protein operates within amino-acid biosynthesis; L-histidine biosynthesis; L-histidine from 5-phospho-alpha-D-ribose 1-diphosphate: step 5/9. Its function is as follows. IGPS catalyzes the conversion of PRFAR and glutamine to IGP, AICAR and glutamate. The HisF subunit catalyzes the cyclization activity that produces IGP and AICAR from PRFAR using the ammonia provided by the HisH subunit. The protein is Imidazole glycerol phosphate synthase subunit HisF of Campylobacter fetus subsp. fetus (strain 82-40).